The sequence spans 260 residues: Small ribosomal subunit protein uS2 (260 aa).

The protein belongs to the universal ribosomal protein uS2 family.

This Streptococcus sanguinis (strain SK36) protein is Small ribosomal subunit protein uS2.